The primary structure comprises 415 residues: ORC1-type DNA replication protein 2 (415 aa).

ATP contacts are provided by residues 69–73 (TGKSV), Tyr-215, and Arg-227.

The protein belongs to the CDC6/cdc18 family.

In terms of biological role, involved in regulation of DNA replication. This Sulfolobus acidocaldarius (strain ATCC 33909 / DSM 639 / JCM 8929 / NBRC 15157 / NCIMB 11770) protein is ORC1-type DNA replication protein 2 (cdc6-2).